The chain runs to 102 residues: Small ribosomal subunit protein uS10 (102 aa).

The protein belongs to the universal ribosomal protein uS10 family. In terms of assembly, part of the 30S ribosomal subunit.

Involved in the binding of tRNA to the ribosomes. This chain is Small ribosomal subunit protein uS10, found in Methanosphaerula palustris (strain ATCC BAA-1556 / DSM 19958 / E1-9c).